The primary structure comprises 360 residues: MKSTLLNKKSQQTTPAWEFFCSWVTTTENRLYLGWFGCLMVPTLVSATFAYIIGFLAAPPVDIDGIREPVSGSLLYANNIISGAVIPSSNAMGVHFYPIWEAASLDEWLYNGGTYQLVVFHFFIGVCSYLGREWELSYRLGMRPWIFVAFSAPVAAASAVFIVYPIGQGSFSDGMPLGISGTFNFMLVFQAEHNILMHPLHMFGVAAVFGGSLFSAMHGSLVTSSLLKETAEFESANYGYRFGQSTETYNIVAAHGYFGRLIFQYASFNNSRSLHFFLGAWPVVGIWLTAMGVSTMAFNLNGLNFQQSILDASGCPINTWADILNRANLGMEVMHERNAHNFPLDLACANCLLSLWPMVG.

Transmembrane regions (helical) follow at residues tyrosine 32–phenylalanine 49, histidine 121–leucine 136, and tryptophan 145–alanine 159. A chlorophyll a-binding site is contributed by histidine 121. Tyrosine 129 is a pheophytin a binding site. [CaMn4O5] cluster contacts are provided by aspartate 173 and glutamate 192. The helical transmembrane segment at leucine 200–leucine 221 threads the bilayer. Chlorophyll a is bound at residue histidine 201. Residues histidine 218 and serine 267–phenylalanine 268 contribute to the a quinone site. Histidine 218 is a binding site for Fe cation. Fe cation is bound at residue histidine 275. The chain crosses the membrane as a helical span at residues phenylalanine 277–methionine 291. Residues histidine 335, glutamate 336, aspartate 345, and alanine 347 each contribute to the [CaMn4O5] cluster site. A propeptide spanning residues cysteine 348 to glycine 360 is cleaved from the precursor.

The protein belongs to the reaction center PufL/M/PsbA/D family. PSII is composed of 1 copy each of membrane proteins PsbA, PsbB, PsbC, PsbD, PsbE, PsbF, PsbH, PsbI, PsbJ, PsbK, PsbL, PsbM, PsbT, PsbX, PsbY, PsbZ, Psb30/Ycf12, at least 3 peripheral proteins of the oxygen-evolving complex and a large number of cofactors. It forms dimeric complexes. The D1/D2 heterodimer binds P680, chlorophylls that are the primary electron donor of PSII, and subsequent electron acceptors. It shares a non-heme iron and each subunit binds pheophytin, quinone, additional chlorophylls, carotenoids and lipids. D1 provides most of the ligands for the Mn4-Ca-O5 cluster of the oxygen-evolving complex (OEC). There is also a Cl(-1) ion associated with D1 and D2, which is required for oxygen evolution. The PSII complex binds additional chlorophylls, carotenoids and specific lipids. is required as a cofactor. Tyr-164 forms a radical intermediate that is referred to as redox-active TyrZ, YZ or Y-Z. In terms of processing, C-terminally processed by CtpA; processing is essential to allow assembly of the oxygen-evolving complex and thus photosynthetic growth.

It is found in the plastid. It localises to the chloroplast thylakoid membrane. The enzyme catalyses 2 a plastoquinone + 4 hnu + 2 H2O = 2 a plastoquinol + O2. Functionally, photosystem II (PSII) is a light-driven water:plastoquinone oxidoreductase that uses light energy to abstract electrons from H(2)O, generating O(2) and a proton gradient subsequently used for ATP formation. It consists of a core antenna complex that captures photons, and an electron transfer chain that converts photonic excitation into a charge separation. The D1/D2 (PsbA/PsbD) reaction center heterodimer binds P680, the primary electron donor of PSII as well as several subsequent electron acceptors. In Karenia mikimotoi (Red tide dinoflagellate), this protein is Photosystem II protein D1.